The following is a 1605-amino-acid chain: Ribosome-binding protein 1 (1605 aa).

Residues 1-7 are Lumenal-facing; it reads MDIYDTQ. Residues 8-28 traverse the membrane as a helical segment; sequence TLGVVVFGGFMVVSAIGIFLV. The Cytoplasmic segment spans residues 29 to 1605; it reads STFSMKETSY…GSSSKEGTSV (1577 aa). The segment at 44 to 88 is disordered; it reads NQRKEMAKTHHQKGEKKKKEKTVEKKGKTKKKEEKPNGKIPEHDL. Residues 52–63 are compositionally biased toward basic residues; that stretch reads THHQKGEKKKKE. The span at 64–88 shows a compositional bias: basic and acidic residues; it reads KTVEKKGKTKKKEEKPNGKIPEHDL. Residue Ser-111 is modified to Phosphoserine. The interval 114-150 is disordered; sequence SSVGHTPIATVPAMPQEKLASSPKDRKKKEKKVAKVE. Lys-148 participates in a covalent cross-link: Glycyl lysine isopeptide (Lys-Gly) (interchain with G-Cter in SUMO2). Phosphoserine is present on residues Ser-159 and Ser-165. The interval 172–849 is disordered; it reads ATPKEVPMVA…PGPPDCDGPL (678 aa). 61 repeat units span residues 196-205, 206-215, 216-225, 226-235, 236-245, 246-255, 256-265, 266-275, 276-285, 286-295, 296-305, 306-315, 316-325, 326-335, 336-345, 346-355, 356-365, 366-375, 376-385, 386-395, 396-405, 406-415, 416-425, 426-435, 436-445, 446-455, 456-465, 466-475, 476-485, 486-495, 496-505, 506-515, 516-525, 527-536, 537-546, 547-556, 557-566, 567-576, 577-586, 587-596, 597-606, 607-616, 617-626, 628-637, 638-647, 648-657, 658-667, 668-677, 678-687, 688-697, 698-707, 708-717, 718-727, 729-738, 739-748, 749-758, 759-768, 769-778, 779-788, 789-798, and 799-808. Residues 196–808 are 61 X 10 AA tandem repeats of [NSQ]-[NKQVGA]-[GSAQKRT]-[ASGDTK]-[KGTQSAV]-[KGAED]-[EQVGIPTDMA]-[EGVAS]-[AGVPETNS]-[AQNGPTVS]; that stretch reads SQGKKGQGAQ…QGKKSEMAPA (613 aa). Low complexity predominate over residues 197–208; the sequence is QGKKGQGAQNQA. 4 stretches are compositionally biased toward polar residues: residues 224-258, 274-338, 354-378, and 385-399; these read AQNQ…QNQA. Positions 420-433 are enriched in basic and acidic residues; that stretch reads KKGEAAQKQDKKIE. Composition is skewed to polar residues over residues 435 to 479, 495 to 519, and 526 to 540; these read AQNQ…QNQA. The segment covering 561–574 has biased composition (basic and acidic residues); the sequence is KKGEAAQKQDKKIE. 2 stretches are compositionally biased toward polar residues: residues 576–720 and 736–769; these read AQNQ…QNQG and ASNQ…SPNQ. Phosphoserine is present on Ser-786. Over residues 811-821 the composition is skewed to polar residues; it reads QKASMVQSQEA. Phosphoserine is present on Ser-818. Lys-823 participates in a covalent cross-link: Glycyl lysine isopeptide (Lys-Gly) (interchain with G-Cter in SUMO1). Lys-1135 carries the post-translational modification N6-acetyllysine. 2 positions are modified to phosphoserine: Ser-1162 and Ser-1178. Disordered stretches follow at residues 1460 to 1481 and 1571 to 1605; these read MRSH…AEQD and TTQE…GTSV. Basic and acidic residues predominate over residues 1576–1598; the sequence is LTKEKDTVKKLQEQLGKAEDGSS.

Widely expressed.

It localises to the endoplasmic reticulum membrane. Functionally, acts as a ribosome receptor and mediates interaction between the ribosome and the endoplasmic reticulum membrane. This chain is Ribosome-binding protein 1 (Rrbp1), found in Mus musculus (Mouse).